The chain runs to 159 residues: Phosphopantetheine adenylyltransferase (159 aa).

Threonine 10 contacts substrate. ATP-binding positions include threonine 10–phenylalanine 11 and histidine 18. Lysine 42, methionine 74, and arginine 88 together coordinate substrate. ATP is bound by residues glycine 89–arginine 91, glutamate 99, and tryptophan 124–serine 130.

Belongs to the bacterial CoaD family. Homohexamer. It depends on Mg(2+) as a cofactor.

The protein localises to the cytoplasm. It carries out the reaction (R)-4'-phosphopantetheine + ATP + H(+) = 3'-dephospho-CoA + diphosphate. Its pathway is cofactor biosynthesis; coenzyme A biosynthesis; CoA from (R)-pantothenate: step 4/5. Reversibly transfers an adenylyl group from ATP to 4'-phosphopantetheine, yielding dephospho-CoA (dPCoA) and pyrophosphate. This Salmonella choleraesuis (strain SC-B67) protein is Phosphopantetheine adenylyltransferase.